The chain runs to 677 residues: Elongation factor G 2 (677 aa).

The tr-type G domain maps to 8–283 (SRIRNIGIIA…AVVNFLPSPE (276 aa)). GTP-binding positions include 17 to 24 (AHIDAGKT), 81 to 85 (DTPGH), and 135 to 138 (NKMD).

This sequence belongs to the TRAFAC class translation factor GTPase superfamily. Classic translation factor GTPase family. EF-G/EF-2 subfamily.

Its subcellular location is the cytoplasm. Functionally, catalyzes the GTP-dependent ribosomal translocation step during translation elongation. During this step, the ribosome changes from the pre-translocational (PRE) to the post-translocational (POST) state as the newly formed A-site-bound peptidyl-tRNA and P-site-bound deacylated tRNA move to the P and E sites, respectively. Catalyzes the coordinated movement of the two tRNA molecules, the mRNA and conformational changes in the ribosome. This chain is Elongation factor G 2, found in Syntrophus aciditrophicus (strain SB).